The chain runs to 622 residues: Calmodulin-binding protein 60 C (622 aa).

Residues 1–19 (MQTRYMERTNSMREKRKLE) show a composition bias toward basic and acidic residues. Positions 1-35 (MQTRYMERTNSMREKRKLEEDDNQQQQQQPERKRP) are disordered. The calmodulin-binding stretch occupies residues 10-89 (NSMREKRKLE…RLSERSSPKR (80 aa)). The interval 159 to 282 (EDDDGWSGEE…AFHKKLNKAG (124 aa)) is DNA-binding.

This sequence belongs to the plant ACBP60 protein family. As to quaternary structure, interacts with calmodulin (CaM). Expressed in stems, flowers and root.

It is found in the nucleus. Functionally, transcription activator that binds DNA in a sequence-specific manner, likely 5'-GAAATTTTGG-3', to promote the expression of target genes. The protein is Calmodulin-binding protein 60 C of Arabidopsis thaliana (Mouse-ear cress).